The chain runs to 194 residues: Crossover junction endodeoxyribonuclease RuvC (194 aa).

Residues aspartate 8, glutamate 72, and aspartate 144 contribute to the active site. Positions 8, 72, and 144 each coordinate Mg(2+).

This sequence belongs to the RuvC family. As to quaternary structure, homodimer which binds Holliday junction (HJ) DNA. The HJ becomes 2-fold symmetrical on binding to RuvC with unstacked arms; it has a different conformation from HJ DNA in complex with RuvA. In the full resolvosome a probable DNA-RuvA(4)-RuvB(12)-RuvC(2) complex forms which resolves the HJ. The cofactor is Mg(2+).

It localises to the cytoplasm. It catalyses the reaction Endonucleolytic cleavage at a junction such as a reciprocal single-stranded crossover between two homologous DNA duplexes (Holliday junction).. The RuvA-RuvB-RuvC complex processes Holliday junction (HJ) DNA during genetic recombination and DNA repair. Endonuclease that resolves HJ intermediates. Cleaves cruciform DNA by making single-stranded nicks across the HJ at symmetrical positions within the homologous arms, yielding a 5'-phosphate and a 3'-hydroxyl group; requires a central core of homology in the junction. The consensus cleavage sequence is 5'-(A/T)TT(C/G)-3'. Cleavage occurs on the 3'-side of the TT dinucleotide at the point of strand exchange. HJ branch migration catalyzed by RuvA-RuvB allows RuvC to scan DNA until it finds its consensus sequence, where it cleaves and resolves the cruciform DNA. The sequence is that of Crossover junction endodeoxyribonuclease RuvC from Psychrobacter sp. (strain PRwf-1).